Consider the following 98-residue polypeptide: Large ribosomal subunit protein eL21 (98 aa).

Belongs to the eukaryotic ribosomal protein eL21 family.

The protein is Large ribosomal subunit protein eL21 of Korarchaeum cryptofilum (strain OPF8).